The primary structure comprises 350 residues: Quinone oxidoreductase-like protein 2 (350 aa).

The residue at position 36 (Lys36) is an N6-acetyllysine. Lys201 is subject to N6-succinyllysine. 2 positions are modified to N6-acetyllysine: Lys302 and Lys328.

Belongs to the zinc-containing alcohol dehydrogenase family. Quinone oxidoreductase subfamily.

This Rattus norvegicus (Rat) protein is Quinone oxidoreductase-like protein 2.